Reading from the N-terminus, the 920-residue chain is Puromycin-sensitive aminopeptidase (920 aa).

Residues glutamate 181 and 317–321 (GAMEN) each bind substrate. Histidine 353 is a binding site for Zn(2+). Glutamate 354 acts as the Proton acceptor in catalysis. Residues histidine 357 and glutamate 376 each coordinate Zn(2+). Tyrosine 465 is modified (3'-nitrotyrosine). Residues 727 to 731 (RRRFK) carry the Nuclear localization signal motif.

Belongs to the peptidase M1 family. As to quaternary structure, monomer. Requires Zn(2+) as cofactor. Widely expressed. Highest expression in brain, particularly the striatum and hippocampus. Expressed in Sertoli cells.

The protein localises to the cytoplasm. Its subcellular location is the cytosol. The protein resides in the nucleus. The catalysed reaction is Release of an N-terminal amino acid, preferentially alanine, from a wide range of peptides, amides and arylamides.. Strongly inhibited by bestatin, leuhistin, actinonin, amastatin, 1,10-phenanthroline, DFP, PCMBS, Zn(2+), Cd(2+), Co(2+), Cu(2+), Hg(2+), EDTA and puromycin. Not inhibited by PMSF, and only slightly inhibited by leupeptin and aprotinin. Activity is increased by Mg(2+) and Ca(2+). Functionally, aminopeptidase with broad substrate specificity for several peptides. Involved in proteolytic events essential for cell growth and viability. May act as regulator of neuropeptide activity. Plays a role in the antigen-processing pathway for MHC class I molecules. Involved in the N-terminal trimming of cytotoxic T-cell epitope precursors. Digests the poly-Q peptides found in many cellular proteins. In Mus musculus (Mouse), this protein is Puromycin-sensitive aminopeptidase (Npepps).